Here is a 1252-residue protein sequence, read N- to C-terminus: Elongator complex protein 1 (1252 aa).

Residues 814 to 1252 (VDVNDLYNVA…MMDWQHEILQ (439 aa)) form a mediates dimerization region. S1094 carries the post-translational modification Phosphoserine. Residues 1097-1116 (SSQYSGTSRRTGKTFRSSKN) form a disordered region. Residues 1106 to 1116 (RTGKTFRSSKN) are compositionally biased toward basic residues. The tract at residues 1111–1129 (FRSSKNRRKHERKLFSLKP) is required for binding to tRNA.

This sequence belongs to the ELP1/IKA1 family. Homodimer. Component of the elongator complex composed of Elp1, Elp2, Elp3, Elp4, Elp5 and Elp6. The elongator complex associates with and stabilizes microtubules; efficient interaction requires the full complex.

It is found in the cytoplasm. The protein localises to the nucleus. The protein resides in the cytoskeleton. Its subcellular location is the spindle. The protein operates within tRNA modification; 5-methoxycarbonylmethyl-2-thiouridine-tRNA biosynthesis. In terms of biological role, component of the elongator complex, which is required for multiple tRNA modifications, including mcm5U (5-methoxycarbonylmethyl uridine), mcm5s2U (5-methoxycarbonylmethyl-2-thiouridine), and ncm5U (5-carbamoylmethyl uridine). The elongator complex catalyzes formation of carboxymethyluridine in the wobble base at position 34 in tRNAs. ELP1 binds to tRNA, mediating interaction of the elongator complex with tRNA. Binding by the elongator complex stabilizes microtubules and promotes their growth. This induces central spindle asymmetry, promoting polarized signaling endosome trafficking during asymmetric cell division and cell fate assignation of sensory organ precursor cells. Involved in protein synthesis-dependent long-term memory formation, probably as part of the elongator complex. The polypeptide is Elongator complex protein 1 (Drosophila melanogaster (Fruit fly)).